We begin with the raw amino-acid sequence, 110 residues long: U1-lycotoxin-Ls1kk (110 aa).

The signal sequence occupies residues 1-20 (MKFVLLFGVFLVTLFSYSSA). The propeptide occupies 21-44 (EMLDDFDQADEDELLSLIEKEEAR). 4 disulfides stabilise this stretch: Cys-47–Cys-62, Cys-54–Cys-71, Cys-61–Cys-89, and Cys-73–Cys-87.

Belongs to the neurotoxin 19 (CSTX) family. 03 subfamily. As to expression, expressed by the venom gland.

Its subcellular location is the secreted. In Lycosa singoriensis (Wolf spider), this protein is U1-lycotoxin-Ls1kk.